A 1559-amino-acid polypeptide reads, in one-letter code: Bile pigment transporter 1 (1559 aa).

Residues 1 to 29 (MSSLEVVDGCPYGYRPYPDSGTNALNPCF) are Vacuolar-facing. The chain crosses the membrane as a helical span at residues 30-50 (ISVISAWQAVFFLLIGSYQLW). At 51-84 (KLYKNNKVPPRFKNFPTLPSKINSRHLTHLTNVC) the chain is on the cytoplasmic side. Residues 85–105 (FQSTLIICELALVSQSSDRVY) form a helical membrane-spanning segment. Residues 106 to 110 (PFILK) lie on the Vacuolar side of the membrane. A helical membrane pass occupies residues 111 to 127 (KALYLNLLFNLGISLPT). The Cytoplasmic portion of the chain corresponds to 128-139 (QYLAYFKSTFSM). A helical transmembrane segment spans residues 140-160 (GNQLFYYMFQILLQLFLILQR). At 161 to 178 (YYHGSSNERLTVISGQTA) the chain is on the vacuolar side. A helical transmembrane segment spans residues 179-199 (MILEVLLLFNSVAIFIYDLCI). The Cytoplasmic portion of the chain corresponds to 200 to 283 (FEPINELSEY…WLNRNSLWRA (84 aa)). The helical transmembrane segment at 284-304 (IWKSFGRTISVAMLYETTSDL) threads the bilayer. Positions 292-578 (ISVAMLYETT…VPSMINTIIE (287 aa)) constitute an ABC transmembrane type-1 1 domain. Over 305-333 (LSVVQPQFLRIFIDGLNPETSSKYPPLNG) the chain is Vacuolar. A helical membrane pass occupies residues 334-354 (VFIALTLFVISVVSVFLTNQF). At 355–410 (YIGIFEAGLGIRGSLASLVYQKSLRLTLAERNEKSTGDILNLMSVDVLRIQRFFEN) the chain is on the cytoplasmic side. A helical transmembrane segment spans residues 411–431 (AQTIIGAPIQIIVVLTSLYWL). The Vacuolar portion of the chain corresponds to 432-434 (LGK). A helical transmembrane segment spans residues 435 to 455 (AVIGGLVTMAIMMPINAFLSR). Residues 456-518 (KVKKLSKTQM…NFRKIGIVSN (63 aa)) are Cytoplasmic-facing. A helical transmembrane segment spans residues 519-539 (LIYFAWNCVPLMVTCSTFGLF). The Vacuolar portion of the chain corresponds to 540-560 (SLFSDSPLSPAIVFPSLSLFN). Residues 561-581 (ILNSAIYSVPSMINTIIETSV) form a helical membrane-spanning segment. At 582 to 972 (SMERLKSFLL…VKTKIYLAYI (391 aa)) the chain is on the cytoplasmic side. In terms of domain architecture, ABC transporter 1 spans 639–871 (LRTDEESIIG…KNNTSKLKKL (233 aa)). Ser645 is subject to Phosphoserine. 672–679 (GRVGAGKS) contributes to the ATP binding site. The disordered stretch occupies residues 877 to 899 (SPIDNGNESDVQTEHRSESEVDE). Ser885 carries the phosphoserine modification. Thr889 is subject to Phosphothreonine. Residues Ser893 and Ser895 each carry the phosphoserine modification. Thr916 is subject to Phosphothreonine. Phosphoserine is present on residues Ser927 and Ser931. Thr934 is subject to Phosphothreonine. Residues 973–993 (KACGVLGVVLFFLFMILTRVF) traverse the membrane as a helical segment. The ABC transmembrane type-1 2 domain maps to 980–1265 (VVLFFLFMIL…IVRTTVTIET (286 aa)). Residues 994–1030 (DLAENFWLKYWSESNEKNGSNERVWMFVGVYSLIGVA) are Vacuolar-facing. N-linked (GlcNAc...) asparagine glycosylation occurs at Asn1011. Residues 1031–1052 (SAAFNNLRSIMMLLYCSIRGSK) traverse the membrane as a helical segment. The Cytoplasmic segment spans residues 1053–1095 (KLHESMAKSVIRSPMTFFETTPVGRIINRFSSDMDAVDSNLQY). Residues 1096-1116 (IFSFFFKSILTYLVTVILVGY) traverse the membrane as a helical segment. A topological domain (vacuolar) is located at residue Asn1117. The chain crosses the membrane as a helical span at residues 1118–1138 (MPWFLVFNMFLVVIYIYYQTF). The Cytoplasmic portion of the chain corresponds to 1139–1209 (YIVLSRELKR…STNRWLSVRL (71 aa)). A helical membrane pass occupies residues 1210-1230 (QTIGATIVLATAILALATMNT). At 1231–1235 (KRQLS) the chain is on the vacuolar side. The chain crosses the membrane as a helical span at residues 1236–1256 (SGMVGLLMSYSLEVTGSLTWI). Over 1257–1559 (VRTTVTIETN…SLCEKGGYLK (303 aa)) the chain is Cytoplasmic. An ABC transporter 2 domain is found at 1302-1553 (IEFKNYSTKY…KTSIFYSLCE (252 aa)). 1336 to 1343 (GRTGAGKS) provides a ligand contact to ATP. Basic and acidic residues predominate over residues 1420–1433 (HLEKMLHSKPRGDD). Positions 1420–1439 (HLEKMLHSKPRGDDSNEEDG) are disordered.

It belongs to the ABC transporter superfamily.

The protein resides in the vacuole membrane. In terms of biological role, cooperates for the ATP-dependent vacuolar transport of bilirubin and glutathione conjugates. The protein is Bile pigment transporter 1 (BPT1) of Saccharomyces cerevisiae (strain ATCC 204508 / S288c) (Baker's yeast).